The chain runs to 281 residues: Cytosolic Fe-S cluster assembly factor CFD1 (281 aa).

Position 24–31 (24–31) interacts with ATP; it reads GKGGVGKS. [4Fe-4S] cluster contacts are provided by C201 and C204.

The protein belongs to the Mrp/NBP35 ATP-binding proteins family. NUBP2/CFD1 subfamily. Heterotetramer of 2 NBP35 and 2 CFD1 chains. The cofactor is [4Fe-4S] cluster.

It localises to the cytoplasm. Its function is as follows. Component of the cytosolic iron-sulfur (Fe/S) protein assembly (CIA) machinery. Required for maturation of extramitochondrial Fe-S proteins. The NBP35-CFD1 heterotetramer forms a Fe-S scaffold complex, mediating the de novo assembly of an Fe-S cluster and its transfer to target apoproteins. Required for biogenesis and export of both ribosomal subunits, which may reflect a role in assembly of the Fe/S clusters in RLI1, a protein which performs rRNA processing and ribosome export. In Eremothecium gossypii (strain ATCC 10895 / CBS 109.51 / FGSC 9923 / NRRL Y-1056) (Yeast), this protein is Cytosolic Fe-S cluster assembly factor CFD1.